The chain runs to 205 residues: Thymidylate kinase (205 aa).

11–18 (GVEGAGKS) contacts ATP.

The protein belongs to the thymidylate kinase family.

It carries out the reaction dTMP + ATP = dTDP + ADP. In terms of biological role, phosphorylation of dTMP to form dTDP in both de novo and salvage pathways of dTTP synthesis. The sequence is that of Thymidylate kinase from Vesicomyosocius okutanii subsp. Calyptogena okutanii (strain HA).